Reading from the N-terminus, the 952-residue chain is Leucine--tRNA ligase (952 aa).

Positions 48-58 (PYLNGVLHAGH) match the 'HIGH' region motif. Residues 644-648 (KLSKS) carry the 'KMSKS' region motif. Lys647 contributes to the ATP binding site.

It belongs to the class-I aminoacyl-tRNA synthetase family.

The protein resides in the cytoplasm. It carries out the reaction tRNA(Leu) + L-leucine + ATP = L-leucyl-tRNA(Leu) + AMP + diphosphate. This chain is Leucine--tRNA ligase, found in Methanococcus vannielii (strain ATCC 35089 / DSM 1224 / JCM 13029 / OCM 148 / SB).